The sequence spans 291 residues: ATP synthase gamma chain (291 aa).

This sequence belongs to the ATPase gamma chain family. As to quaternary structure, F-type ATPases have 2 components, CF(1) - the catalytic core - and CF(0) - the membrane proton channel. CF(1) has five subunits: alpha(3), beta(3), gamma(1), delta(1), epsilon(1). CF(0) has three main subunits: a, b and c.

Its subcellular location is the cell inner membrane. In terms of biological role, produces ATP from ADP in the presence of a proton gradient across the membrane. The gamma chain is believed to be important in regulating ATPase activity and the flow of protons through the CF(0) complex. The protein is ATP synthase gamma chain of Rhodopseudomonas palustris (strain HaA2).